Consider the following 735-residue polypeptide: Protein-associating with the carboxyl-terminal domain of ezrin (735 aa).

A lipid anchor (N-myristoyl glycine) is attached at G2. Residues 2–245 (GSENSALKSY…LSTLLSHDFF (244 aa)) form the Protein kinase domain. HEAT repeat units lie at residues 194–249 (FGAL…RNDF), 285–323 (LIASRLVPLLLNQLVFAEPVAVKSFLPYLLGPKKENAPG), 333–370 (LFQSRVIPVLLRLFEVHEEHVRMVLLSHIEAYVEHFTQ), and 372–409 (QLKKVILPQVLLGLRDTSNSIVAITLRSLAVLVSLLGP). S439 carries the phosphoserine modification. 2 disordered regions span residues 505 to 545 (LSDV…ASIH) and 604 to 648 (VPLT…GLGL). Residues 528 to 538 (WPDWSEPEEPE) show a composition bias toward acidic residues. The tract at residues 547 to 735 (WPREPCDVAE…EELAWEDNNW (189 aa)) is interaction with EZR. S701 is subject to Phosphoserine.

It belongs to the protein kinase superfamily. Interacts with EZR/VIL2 C-terminal domain. In terms of processing, may be myristoylated; myristoylation may target it to Golgi compartment.

The protein resides in the cytoplasm. Its subcellular location is the golgi apparatus. The protein localises to the cell projection. It localises to the lamellipodium. May play a role in regulating cell adhesion/migration complexes in migrating cells. The protein is Protein-associating with the carboxyl-terminal domain of ezrin (Scyl3) of Mus musculus (Mouse).